The primary structure comprises 458 residues: Argininosuccinate lyase (458 aa).

Belongs to the lyase 1 family. Argininosuccinate lyase subfamily.

Its subcellular location is the cytoplasm. It carries out the reaction 2-(N(omega)-L-arginino)succinate = fumarate + L-arginine. Its pathway is amino-acid biosynthesis; L-arginine biosynthesis; L-arginine from L-ornithine and carbamoyl phosphate: step 3/3. This chain is Argininosuccinate lyase, found in Vibrio cholerae serotype O1 (strain ATCC 39541 / Classical Ogawa 395 / O395).